The chain runs to 105 residues: Multidrug resistance protein EbrA (105 aa).

4 helical membrane-spanning segments follow: residues 2-22, 35-55, 57-77, and 84-104; these read LIGY…AAML, ALVV…LNHI, LSLS…VIGV, and LNAK…LLNW.

It belongs to the drug/metabolite transporter (DMT) superfamily. Small multidrug resistance (SMR) (TC 2.A.7.1) family. EbrA/EbrB subfamily. In terms of assembly, the efflux pump is composed of EbrA and EbrB.

Its subcellular location is the cell membrane. In terms of biological role, part of a multidrug efflux pump. Confers resistance to cationic lipophilic dyes such as ethidium bromide, acriflavine, pyronine Y and safranin O. The efflux is probably coupled to an influx of protons. The chain is Multidrug resistance protein EbrA (ebrA) from Bacillus subtilis (strain 168).